Consider the following 159-residue polypeptide: MGGLKKPKKKYLAGKPKKIWNKQLLLEELQLMGEYGLRNKKELWLARAHLKWIVRRARSLLSMTAEERAPLELPFKEKLYKMGFIEDPNVPLDRVLSLDVRAILERRLQTIVYRMGLAKSIYHARQLIVHGHIAVAGRRVSSPGFLVPRELEDKISLIQ.

The S4 RNA-binding domain maps to 106–158 (RRLQTIVYRMGLAKSIYHARQLIVHGHIAVAGRRVSSPGFLVPRELEDKISLI).

Belongs to the universal ribosomal protein uS4 family. In terms of assembly, part of the 30S ribosomal subunit. Contacts protein S5. The interaction surface between S4 and S5 is involved in control of translational fidelity.

Its function is as follows. One of the primary rRNA binding proteins, it binds directly to 16S rRNA where it nucleates assembly of the body of the 30S subunit. With S5 and S12 plays an important role in translational accuracy. The sequence is that of Small ribosomal subunit protein uS4 from Pyrobaculum neutrophilum (strain DSM 2338 / JCM 9278 / NBRC 100436 / V24Sta) (Thermoproteus neutrophilus).